A 635-amino-acid polypeptide reads, in one-letter code: Threonine--tRNA ligase (635 aa).

Residues 1-61 (MVSIRLPDGS…DRDASLAIVT (61 aa)) enclose the TGS domain. The interval 242-533 (DHRKLGKQLD…LIEHHAGAMP (292 aa)) is catalytic. Zn(2+) contacts are provided by Cys-333, His-384, and His-510.

The protein belongs to the class-II aminoacyl-tRNA synthetase family. In terms of assembly, homodimer. Zn(2+) is required as a cofactor.

Its subcellular location is the cytoplasm. The catalysed reaction is tRNA(Thr) + L-threonine + ATP = L-threonyl-tRNA(Thr) + AMP + diphosphate + H(+). Its function is as follows. Catalyzes the attachment of threonine to tRNA(Thr) in a two-step reaction: L-threonine is first activated by ATP to form Thr-AMP and then transferred to the acceptor end of tRNA(Thr). Also edits incorrectly charged L-seryl-tRNA(Thr). This chain is Threonine--tRNA ligase, found in Burkholderia orbicola (strain MC0-3).